The primary structure comprises 454 residues: UPF0210 protein EUBELI_01067 (454 aa).

This sequence belongs to the UPF0210 family. As to quaternary structure, homodimer.

This Lachnospira eligens (strain ATCC 27750 / DSM 3376 / VPI C15-48 / C15-B4) (Eubacterium eligens) protein is UPF0210 protein EUBELI_01067.